We begin with the raw amino-acid sequence, 516 residues long: Polyprenol-phosphate-mannose--protein mannosyltransferase (516 aa).

Transmembrane regions (helical) follow at residues 113-133, 143-163, 166-186, 234-254, 275-295, 384-404, 413-433, 437-457, and 473-493; these read YNGL…VMLV, STLV…SFVS, TALL…CLMV, WSGL…DAIA, AAYV…APWF, VMLV…GWAL, WRYG…FADI, MYFF…ALIL, and LGLL…AWMY.

It belongs to the glycosyltransferase 39 family.

It localises to the cell membrane. The protein operates within protein modification; protein glycosylation. In terms of biological role, protein O-mannosyltransferase that catalyzes the transfer of a single mannose residue from a polyprenol phospho-mannosyl lipidic donor to the hydroxyl group of selected serine and threonine residues in acceptor proteins. The chain is Polyprenol-phosphate-mannose--protein mannosyltransferase from Mycolicibacterium smegmatis (strain ATCC 700084 / mc(2)155) (Mycobacterium smegmatis).